Reading from the N-terminus, the 209-residue chain is Ribonuclease HII (209 aa).

Residues 18–209 (GLIAGVDEVG…FKPVKALLEG (192 aa)) form the RNase H type-2 domain. A divalent metal cation contacts are provided by Asp-24, Glu-25, and Asp-116.

It belongs to the RNase HII family. Mn(2+) serves as cofactor. Mg(2+) is required as a cofactor.

It is found in the cytoplasm. It carries out the reaction Endonucleolytic cleavage to 5'-phosphomonoester.. In terms of biological role, endonuclease that specifically degrades the RNA of RNA-DNA hybrids. This chain is Ribonuclease HII, found in Shewanella putrefaciens (strain CN-32 / ATCC BAA-453).